Consider the following 447-residue polypeptide: Exodeoxyribonuclease 7 large subunit (447 aa).

This sequence belongs to the XseA family. In terms of assembly, heterooligomer composed of large and small subunits.

The protein resides in the cytoplasm. The catalysed reaction is Exonucleolytic cleavage in either 5'- to 3'- or 3'- to 5'-direction to yield nucleoside 5'-phosphates.. In terms of biological role, bidirectionally degrades single-stranded DNA into large acid-insoluble oligonucleotides, which are then degraded further into small acid-soluble oligonucleotides. The polypeptide is Exodeoxyribonuclease 7 large subunit (Lactiplantibacillus plantarum (strain ATCC BAA-793 / NCIMB 8826 / WCFS1) (Lactobacillus plantarum)).